The following is a 625-amino-acid chain: Probable potassium transport system protein Kup (625 aa).

The next 12 membrane-spanning stretches (helical) occupy residues 10-30 (LAAL…TSPL), 50-70 (LLGV…LKYV), 102-122 (YFPL…DSVI), 142-162 (FDPY…SVQA), 172-192 (FGPI…VNII), 215-235 (FLAF…EALY), 250-270 (WFLV…ALLL), 284-304 (LGAW…IIAS), 340-360 (IYIP…VVGF), 369-389 (AYGI…FFVI), 397-417 (LLLC…LFSA), and 422-442 (LFHG…LMLT).

This sequence belongs to the HAK/KUP transporter (TC 2.A.72) family.

It localises to the cell inner membrane. The catalysed reaction is K(+)(in) + H(+)(in) = K(+)(out) + H(+)(out). Functionally, transport of potassium into the cell. Likely operates as a K(+):H(+) symporter. This is Probable potassium transport system protein Kup from Janthinobacterium sp. (strain Marseille) (Minibacterium massiliensis).